We begin with the raw amino-acid sequence, 424 residues long: Ankyrin repeat domain-containing protein 61 (424 aa).

ANK repeat units lie at residues 80 to 109 (LSFL…DPEA), 113 to 169 (QGFT…ARVD), 172 to 201 (HRHC…QVNA), 205 to 234 (SSMT…SVNC), 239 to 278 (TGNT…QVNA), 282 to 311 (DGQA…NVNI), and 315 to 348 (NGES…PLRL).

In Bos taurus (Bovine), this protein is Ankyrin repeat domain-containing protein 61 (ANKRD61).